A 347-amino-acid polypeptide reads, in one-letter code: Protein RecA (347 aa).

Residue 68 to 75 (GPESSGKT) coordinates ATP.

It belongs to the RecA family.

It is found in the cytoplasm. Can catalyze the hydrolysis of ATP in the presence of single-stranded DNA, the ATP-dependent uptake of single-stranded DNA by duplex DNA, and the ATP-dependent hybridization of homologous single-stranded DNAs. It interacts with LexA causing its activation and leading to its autocatalytic cleavage. This Nocardia farcinica (strain IFM 10152) protein is Protein RecA.